We begin with the raw amino-acid sequence, 650 residues long: Chaperone protein HtpG (650 aa).

The tract at residues 1 to 356 is a; substrate-binding; that stretch reads MSTRVETLEF…THDLSLNISR (356 aa). Residues 222-245 are disordered; that stretch reads AKDRDSNDDGTAESGAGAENAGDR. Residues 357–572 form a b region; sequence EILQQDRRIQ…TFDMTPALEK (216 aa). The segment at 573–650 is c; that stretch reads MYRAMGHEMP…LLAERLAEAL (78 aa).

Belongs to the heat shock protein 90 family. As to quaternary structure, homodimer.

The protein localises to the cytoplasm. Molecular chaperone. Has ATPase activity. In Frankia casuarinae (strain DSM 45818 / CECT 9043 / HFP020203 / CcI3), this protein is Chaperone protein HtpG.